The sequence spans 409 residues: MVKETKFYDILGVPVTATDVEIKKAYRKCALKYHPDKNPSEEAAEKFKEASAAYEILSDPEKRDIYDQFGEDGLSGAGGAGGFPGGGFGFGDDIFSQFFGAGGAQRPRGPQRGKDIKHEISASLEELYKGRTAKLALNKQILCKECEGRGGKKGAVKKCTSCNGQGIKFVTRQMGPMIQRFQTECDVCHGTGDIIDPKDRCKSCNGKKVENERKILEVHVEPGMKDGQRIVFKGEADQAPDVIPGDVVFIVSERPHKSFKRDGDDLVYEAEIDLLTAIAGGEFALEHVSGDWLKVGIVPGEVIAPGMRKVIEGKGMPIPKYGGYGNLIIKFTIKFPENHFTSEENLKKLEEILPPRIVPAIPKKATVDECVLADFDPAKYNRTRASRGGANYDSDEEEQGGEGVQCASQ.

The segment at 1–172 is necessary for HAP1 repression in the absence of heme; that stretch reads MVKETKFYDI…NGQGIKFVTR (172 aa). Residues 4–72 form the J domain; it reads ETKFYDILGV…RDIYDQFGED (69 aa). Substrate-binding positions include I116 and 135–137; that span reads LAL. Residues 130–213 form a CR-type zinc finger; it reads GRTAKLALNK…CNGKKVENER (84 aa). 6 residues coordinate Zn(2+): C143, C146, C159, C162, C185, and C188. 3 CXXCXGXG motif repeats span residues 143–150, 159–166, and 185–192; these read CKECEGRG, CTSCNGQG, and CDVCHGTG. Residue K198 forms a Glycyl lysine isopeptide (Lys-Gly) (interchain with G-Cter in ubiquitin) linkage. Residues C201 and C204 each contribute to the Zn(2+) site. Residues 201 to 208 form a CXXCXGXG motif repeat; the sequence is CKSCNGKK. Substrate is bound by residues 215 to 216 and 247 to 249; these read IL and VVF. The interval 382–409 is disordered; sequence RTRASRGGANYDSDEEEQGGEGVQCASQ. C406 is modified (cysteine methyl ester). C406 carries the S-farnesyl cysteine lipid modification. The propeptide at 407-409 is removed in mature form; that stretch reads ASQ.

Homodimer. Interacts with HAP1. Component of the HMC including HAP1, SRO9 and YDJ1.

Its subcellular location is the cytoplasm. It localises to the perinuclear region. In terms of biological role, probably involved in mitochondrial protein import. Is also required for efficient translocation of pre-pro-alpha-factor. Involved in heme regulation of HAP1, as a component of the high-molecular-weight (HMC) complex. The polypeptide is Mitochondrial protein import protein MAS5 (YDJ1) (Saccharomyces cerevisiae (strain ATCC 204508 / S288c) (Baker's yeast)).